A 232-amino-acid chain; its full sequence is Putative homeobox protein NANOG2 (232 aa).

The segment at 1-39 (MDLPIQDSHDSSTSPKGKQPTTAEKSATKKEDKVPVKKQ) is disordered. Residues 11 to 25 (SSTSPKGKQPTTAEK) show a composition bias toward polar residues. Basic and acidic residues predominate over residues 26-35 (SATKKEDKVP). 8 repeat units span residues 123–127 (WSNQT), 128–132 (WNNST), 133–137 (WSNQT), 143–147 (WSNHS), 148–152 (WNTQT), 153–157 (WCTQS), 158–162 (WNNQA), and 163–167 (WNSPF). Residues 123–167 (WSNQTWNNSTWSNQTQNIQSWSNHSWNTQTWCTQSWNNQAWNSPF) are 8 X repeats starting with a Trp in each unit. The interval 123–167 (WSNQTWNNSTWSNQTQNIQSWSNHSWNTQTWCTQSWNNQAWNSPF) is sufficient for transactivation activity. Residues 168-232 (YNCGEESLQS…YSTNMXXEDV (65 aa)) are sufficient for strong transactivation activity.

This sequence belongs to the Nanog homeobox family.

It localises to the nucleus. In terms of biological role, probable transcriptional regulator. In Pan paniscus (Pygmy chimpanzee), this protein is Putative homeobox protein NANOG2 (NANOGP1).